The sequence spans 58 residues: Large ribosomal subunit protein uL30 (58 aa).

The protein belongs to the universal ribosomal protein uL30 family. In terms of assembly, part of the 50S ribosomal subunit.

The protein is Large ribosomal subunit protein uL30 of Desulfovibrio desulfuricans (strain ATCC 27774 / DSM 6949 / MB).